A 763-amino-acid polypeptide reads, in one-letter code: DNA polymerase 3 (763 aa).

The protein belongs to the DNA polymerase type-B family.

The catalysed reaction is DNA(n) + a 2'-deoxyribonucleoside 5'-triphosphate = DNA(n+1) + diphosphate. This is DNA polymerase 3 (dpo3) from Saccharolobus shibatae (strain ATCC 51178 / DSM 5389 / JCM 8931 / NBRC 15437 / B12) (Sulfolobus shibatae).